A 156-amino-acid chain; its full sequence is Acyl carrier protein, mitochondrial (156 aa).

The N-terminal 68 residues, M1–Y68, are a transit peptide targeting the mitochondrion. Residues E77 to K152 form the Carrier domain. K88 carries the N6-acetyllysine modification. S112 is subject to O-(pantetheine 4'-phosphoryl)serine.

It belongs to the acyl carrier protein (ACP) family. As to quaternary structure, mammalian complex I is composed of 45 different subunits. Interacts with ETFRF1. Identified in a complex composed of MALSU1, MIEF1 upstream open reading frame protein and NDUFAB1; within the trimeric complex, MIEF1 upstream open reading frame protein functions as a bridging scaffold that interacts with MALSU1 on one side, and with NDUFAB1 on the other side. The complex interacts with the mitochondrial large ribosomal subunit. Interacts with alpha-1-microglobulin chain; this interaction is required for the maintenance of mitochondrial redox homeostasis. Component of the mitochondrial core iron-sulfur cluster (ISC) complex composed of NFS1, LYRM4, NDUFAB1, ISCU, FXN, and FDX2; this complex is a heterohexamer containing two copies of each monomer. Component of the cyteine desulfurase complex composed of NFS1, LYRM4 and NDUFAB1; this complex contributes to the stability and cysteine desulfurase activity of NFS1. Post-translationally, phosphopantetheinylation at Ser-112 is essential for interactions with LYR motif-containing proteins.

The protein resides in the mitochondrion. Its function is as follows. Carrier of the growing fatty acid chain in fatty acid biosynthesis. Accessory and non-catalytic subunit of the mitochondrial membrane respiratory chain NADH dehydrogenase (Complex I), which functions in the transfer of electrons from NADH to the respiratory chain. Accessory protein, of the core iron-sulfur cluster (ISC) assembly complex, that regulates, in association with LYRM4, the stability and the cysteine desulfurase activity of NFS1 and participates in the [2Fe-2S] clusters assembly on the scaffolding protein ISCU. The core iron-sulfur cluster (ISC) assembly complex is involved in the de novo synthesis of a [2Fe-2S] cluster, the first step of the mitochondrial iron-sulfur protein biogenesis. This process is initiated by the cysteine desulfurase complex (NFS1:LYRM4:NDUFAB1) that produces persulfide which is delivered on the scaffold protein ISCU in a FXN-dependent manner. Then this complex is stabilized by FDX2 which provides reducing equivalents to accomplish the [2Fe-2S] cluster assembly. Finally, the [2Fe-2S] cluster is transferred from ISCU to chaperone proteins, including HSCB, HSPA9 and GLRX5. This chain is Acyl carrier protein, mitochondrial, found in Gorilla gorilla gorilla (Western lowland gorilla).